Reading from the N-terminus, the 807-residue chain is Glycerol-3-phosphate acyltransferase (807 aa).

The short motif at 308–313 (CHRSHM) is the HXXXXD motif element.

Belongs to the GPAT/DAPAT family.

It is found in the cell inner membrane. The catalysed reaction is sn-glycerol 3-phosphate + an acyl-CoA = a 1-acyl-sn-glycero-3-phosphate + CoA. It participates in phospholipid metabolism; CDP-diacylglycerol biosynthesis; CDP-diacylglycerol from sn-glycerol 3-phosphate: step 1/3. The protein is Glycerol-3-phosphate acyltransferase of Shewanella amazonensis (strain ATCC BAA-1098 / SB2B).